The chain runs to 114 residues: Small ribosomal subunit protein bS16 (114 aa).

This sequence belongs to the bacterial ribosomal protein bS16 family.

This Prochlorococcus marinus subsp. pastoris (strain CCMP1986 / NIES-2087 / MED4) protein is Small ribosomal subunit protein bS16.